The following is a 169-amino-acid chain: Ubiquitin-fold modifier-conjugating enzyme 1 (169 aa).

Cysteine 116 functions as the Glycyl thioester intermediate in the catalytic mechanism.

The protein belongs to the ubiquitin-conjugating enzyme family. UFC1 subfamily.

Its function is as follows. E2-like enzyme which forms an intermediate with UFM1 via a thioester linkage. The sequence is that of Ubiquitin-fold modifier-conjugating enzyme 1 from Nematostella vectensis (Starlet sea anemone).